A 742-amino-acid chain; its full sequence is Synaptic vesicle glycoprotein 2A (742 aa).

An interaction with SYT1 region spans residues 1 to 57 (MEEGFRDRAAFIRGAKDIAKEVKKHAAKKVVKGLDRVQDEYSRRSYSRFEEEDDDDD). The Cytoplasmic portion of the chain corresponds to 1–169 (MEEGFRDRAA…GHGRFQWTLY (169 aa)). Positions 33–49 (GLDRVQDEYSRRSYSRF) are enriched in basic and acidic residues. The interval 33-144 (GLDRVQDEYS…GRGEAQRRKE (112 aa)) is disordered. Serine 80 and serine 81 each carry phosphoserine. At threonine 84 the chain carries Phosphothreonine. Gly residues predominate over residues 122–137 (VRGGLSDGEGPPGGRG). Serine 127 carries the phosphoserine modification. Residues 170–190 (FVLGLALMADGVEVFVVGFVL) form a helical membrane-spanning segment. The Extracellular segment spans residues 191–205 (PSAEKDMCLSDSNKG). Residues 206 to 226 (MLGLIVYLGMMVGAFLWGGLA) form a helical membrane-spanning segment. Topologically, residues 227-233 (DRLGRRQ) are cytoplasmic. A helical membrane pass occupies residues 234-254 (CLLISLSVNSVFAFFSSFVQG). The Extracellular portion of the chain corresponds to 255–262 (YGTFLFCR). A helical transmembrane segment spans residues 263–283 (LLSGVGIGGSIPIVFSYFSEF). Topologically, residues 284-294 (LAQEKRGEHLS) are cytoplasmic. The helical transmembrane segment at 295 to 315 (WLCMFWMIGGVYAAAMAWAII) threads the bilayer. Over 316–334 (PHYGWSFQMGSAYQFHSWR) the chain is Extracellular. The helical transmembrane segment at 335 to 355 (VFVLVCAFPSVFAIGALTTQP) threads the bilayer. Residues 356 to 447 (ESPRFFLENG…CFGPEYRRIT (92 aa)) are Cytoplasmic-facing. Serine 393 carries the post-translational modification Phosphoserine. Residues 448 to 468 (LMMMGVWFTMSFSYYGLTVWF) form a helical membrane-spanning segment. The Extracellular segment spans residues 469 to 598 (PDMIRHLQAV…GTGEGAYMVY (130 aa)). Residue tyrosine 480 is modified to Phosphotyrosine. N-linked (GlcNAc...) asparagine glycans are attached at residues asparagine 498, asparagine 548, and asparagine 573. A helical membrane pass occupies residues 599–619 (FVSFLGTLAVLPGNIVSALLM). Over 620 to 626 (DKIGRLR) the chain is Cytoplasmic. A helical membrane pass occupies residues 627–647 (MLAGSSVMSCVSCFFLSFGNS). The Extracellular portion of the chain corresponds to 648 to 651 (ESAM). The chain crosses the membrane as a helical span at residues 652-672 (IALLCLFGGVSIASWNALDVL). The Cytoplasmic portion of the chain corresponds to 673–690 (TVGLYPSDKRTTAFGFLN). Residues 691–711 (ALCKLAAVLGISIFTSFVGIT) traverse the membrane as a helical segment. Position 712 (lysine 712) is a topological domain, extracellular. The chain crosses the membrane as a helical span at residues 713-733 (AAPIPFASAALALGSSLALKL). Over 734-742 (PETRGQVLQ) the chain is Cytoplasmic.

This sequence belongs to the major facilitator superfamily. Interacts with SYT1/synaptotagmin-1 in a calcium-dependent manner. Binds the adapter protein complex AP-2. In terms of processing, phosphorylation by CK1 of the N-terminal cytoplasmic domain regulates interaction with SYT1. Post-translationally, N-glycosylated.

It localises to the presynapse. It is found in the cytoplasmic vesicle. Its subcellular location is the secretory vesicle. The protein resides in the synaptic vesicle membrane. Plays a role in the control of regulated secretion in neural and endocrine cells, enhancing selectively low-frequency neurotransmission. Positively regulates vesicle fusion by maintaining the readily releasable pool of secretory vesicles. This chain is Synaptic vesicle glycoprotein 2A (SV2A), found in Macaca fascicularis (Crab-eating macaque).